Reading from the N-terminus, the 449-residue chain is Glucose-6-phosphate isomerase (449 aa).

E291 functions as the Proton donor in the catalytic mechanism. Residues H312 and K426 contribute to the active site.

The protein belongs to the GPI family.

The protein resides in the cytoplasm. It carries out the reaction alpha-D-glucose 6-phosphate = beta-D-fructose 6-phosphate. Its pathway is carbohydrate biosynthesis; gluconeogenesis. It functions in the pathway carbohydrate degradation; glycolysis; D-glyceraldehyde 3-phosphate and glycerone phosphate from D-glucose: step 2/4. Functionally, catalyzes the reversible isomerization of glucose-6-phosphate to fructose-6-phosphate. The polypeptide is Glucose-6-phosphate isomerase (Streptococcus pyogenes serotype M1).